The primary structure comprises 656 residues: Nuclear pore complex protein Nup85 (656 aa).

Methionine 1 bears the N-acetylmethionine mark. Lysine 92 carries the post-translational modification N6-acetyllysine. Serine 223 carries the post-translational modification Phosphoserine.

The protein belongs to the nucleoporin Nup85 family. Component of the nuclear pore complex (NPC). Component of the NPC Nup107-160 subcomplex, consisting of at least NUP107, NUP98/Nup96, NUP160, NUP133, NUP85, NUP37, NUP43 and SEC13. Interacts with NUP160, NUP133 and SEC13. Interacts with NUP37, NUP107 and NUP43. Interacts with CCR2.

It localises to the nucleus. The protein resides in the nuclear pore complex. It is found in the chromosome. The protein localises to the centromere. Its subcellular location is the kinetochore. It localises to the cytoplasm. The protein resides in the cytoskeleton. It is found in the spindle. The protein localises to the nucleus membrane. In terms of biological role, essential component of the nuclear pore complex (NPC) that seems to be required for NPC assembly and maintenance. As part of the NPC Nup107-160 subcomplex plays a role in RNA export and in tethering NUP96/Nup98 and NUP153 to the nucleus. The Nup107-160 complex seems to be required for spindle assembly during mitosis. NUP85 is required for membrane clustering of CCL2-activated CCR2. Seems to be involved in CCR2-mediated chemotaxis of monocytes and may link activated CCR2 to the phosphatidyl-inositol 3-kinase-Rac-lammellipodium protrusion cascade. Involved in nephrogenesis. The chain is Nuclear pore complex protein Nup85 (NUP85) from Homo sapiens (Human).